The sequence spans 1887 residues: Fatty acid synthase subunit alpha (1887 aa).

Lys37 participates in a covalent cross-link: Glycyl lysine isopeptide (Lys-Gly) (interchain with G-Cter in ubiquitin). Phosphoserine is present on Ser50. Residues 96-120 are disordered; the sequence is ELAAKEEPAKEEAPAPTPAASAPAP. Over residues 98–108 the composition is skewed to basic and acidic residues; the sequence is AAKEEPAKEEA. In terms of domain architecture, Carrier spans 145–220; the sequence is VKASLLLHVL…ETFQDTFSGA (76 aa). Residue Ser180 is modified to O-(pantetheine 4'-phosphoryl)serine. Ser523 carries the phosphoserine modification. The tract at residues 675–874 is beta-ketoacyl reductase; sequence DKYVLITGAG…CGAIIGWTRG (200 aa). Ser958 is modified (phosphoserine). Positions 1123 to 1657 constitute a Ketosynthase family 3 (KS3) domain; the sequence is QEVIVEEDLE…QKGGQAIVVH (535 aa). The For beta-ketoacyl synthase activity role is filled by Cys1305. Ser1440 is subject to Phosphoserine. Active-site for beta-ketoacyl synthase activity residues include His1542 and His1583. Mg(2+)-binding residues include Asp1772, Val1773, and Glu1774. Acetyl-CoA contacts are provided by residues 1772-1774, Tyr1798, Ser1808, 1817-1827, 1841-1844, and 1871-1873; these read DVE, EAVFKSLGVKS, RVNK, and ISH. Mg(2+) contacts are provided by Ser1872 and His1873.

Belongs to the thiolase-like superfamily. Fungal fatty acid synthetase subunit alpha family. [Alpha(6)beta(6)] hexamers of two multifunctional subunits (alpha and beta). Post-translationally, 4'-phosphopantetheine is transferred from CoA to a specific serine of the Acyl carrier domain by the C-terminal PPT domain. This modification is essential for activity because fatty acids are bound in thioester linkage to the sulfhydryl of the prosthetic group.

It carries out the reaction acetyl-CoA + n malonyl-CoA + 2n NADPH + 4n H(+) = a long-chain-acyl-CoA + n CoA + n CO2 + 2n NADP(+).. The catalysed reaction is a fatty acyl-[ACP] + malonyl-[ACP] + H(+) = a 3-oxoacyl-[ACP] + holo-[ACP] + CO2. It catalyses the reaction a (3R)-hydroxyacyl-[ACP] + NADP(+) = a 3-oxoacyl-[ACP] + NADPH + H(+). Inhibited by cerulenin by covalent binding to active site of the ketoacyl synthase (KS) region. Functionally, fatty acid synthetase catalyzes the formation of long-chain fatty acids from acetyl-CoA, malonyl-CoA and NADPH. The alpha subunit contains domains for: acyl carrier protein, 3-oxoacyl-[acyl-carrier-protein] reductase, and 3-oxoacyl-[acyl-carrier-protein] synthase. This subunit coordinates the binding of the six beta subunits to the enzyme complex. The protein is Fatty acid synthase subunit alpha (FAS2) of Saccharomyces cerevisiae (strain ATCC 204508 / S288c) (Baker's yeast).